Reading from the N-terminus, the 288-residue chain is Serine/threonine-protein phosphatase PGAM5, mitochondrial (288 aa).

Topologically, residues 1–6 (MAFRQA) are mitochondrial matrix. A helical membrane pass occupies residues 7–29 (LQLAACGLAGGSAAVLFSAVAVG). The Mitochondrial intermembrane portion of the chain corresponds to 30-288 (KPRAGGDADT…FMPPDKITRS (259 aa)). The interaction with KEAP1 stretch occupies residues 76–81 (NVEFGE). Position 86 is a phosphoserine (serine 86). An N6-acetyllysine mark is found at lysine 115, lysine 143, and lysine 190.

It belongs to the phosphoglycerate mutase family. BPG-dependent PGAM subfamily. Dimer. Forms a ternary complex with NFE2L2 and KEAP1. Interacts with BCL2L1 and MAP3K5. Upon TNF-induced necrosis, forms in complex with RIPK1, RIPK3 and MLKL; the formation of this complex leads to PGAM5 phosphorylation. Isoform 2, but not isoform 1, interacts with DNM1L; this interaction leads to DNM1L dephosphorylation and activation and eventually to mitochondria fragmentation. Phosphorylated by the RIPK1/RIPK3 complex under necrotic conditions. This phosphorylation increases PGAM5 phosphatase activity. In terms of processing, proteolytically cleaved by PARL in response to loss of mitochondrial membrane potential.

Its subcellular location is the mitochondrion outer membrane. It localises to the mitochondrion inner membrane. The catalysed reaction is O-phospho-L-seryl-[protein] + H2O = L-seryl-[protein] + phosphate. It catalyses the reaction O-phospho-L-threonyl-[protein] + H2O = L-threonyl-[protein] + phosphate. Functionally, mitochondrial serine/threonine phosphatase that dephosphorylates various substrates and thus plays a role in different biological processes including cellular senescence or mitophagy. Modulates cellular senescence by regulating mitochondrial dynamics. Mechanistically, participates in mitochondrial fission through dephosphorylating DNM1L/DRP1. Additionally, dephosphorylates MFN2 in a stress-sensitive manner and consequently protects it from ubiquitination and degradation to promote mitochondrial network formation. Regulates mitophagy independent of PARKIN by interacting with and dephosphorylating FUNDC1, which interacts with LC3. Regulates anti-oxidative response by forming a tertiary complex with KEAP1 and NRF2. Regulates necroptosis by acting as a RIPK3 target and recruiting the RIPK1-RIPK3-MLKL necrosis 'attack' complex to mitochondria. The polypeptide is Serine/threonine-protein phosphatase PGAM5, mitochondrial (Pgam5) (Rattus norvegicus (Rat)).